The sequence spans 344 residues: Sulfate/thiosulfate import ATP-binding protein CysA (344 aa).

The 231-residue stretch at 9-239 (IQVSQVSKQF…PATPFVMSFI (231 aa)) folds into the ABC transporter domain. 41–48 (GPSGSGKS) contributes to the ATP binding site.

The protein belongs to the ABC transporter superfamily. Sulfate/tungstate importer (TC 3.A.1.6) family. In terms of assembly, the complex is composed of two ATP-binding proteins (CysA), two transmembrane proteins (CysT and CysW) and a solute-binding protein (CysP).

The protein resides in the cell inner membrane. The catalysed reaction is sulfate(out) + ATP + H2O = sulfate(in) + ADP + phosphate + H(+). The enzyme catalyses thiosulfate(out) + ATP + H2O = thiosulfate(in) + ADP + phosphate + H(+). Part of the ABC transporter complex CysAWTP involved in sulfate/thiosulfate import. Responsible for energy coupling to the transport system. The protein is Sulfate/thiosulfate import ATP-binding protein CysA of Synechococcus elongatus (strain ATCC 33912 / PCC 7942 / FACHB-805) (Anacystis nidulans R2).